Consider the following 397-residue polypeptide: DnaJ homolog subfamily A member 1 (397 aa).

One can recognise a J domain in the interval Thr-6–Gly-68. Position 66 is an N6-acetyllysine (Lys-66). Ser-83 carries the phosphoserine modification. A CR-type zinc finger spans residues Gly-121–Lys-205. Residues Cys-134, Cys-137, Cys-150, Cys-153, Cys-177, Cys-180, Cys-193, and Cys-196 each contribute to the Zn(2+) site. 4 CXXCXGXG motif repeats span residues Cys-134–Gly-141, Cys-150–Gly-157, Cys-177–Gly-184, and Cys-193–Lys-200. Ser-335 is subject to Phosphoserine. The segment at Val-352–Ser-397 is disordered. Positions Glu-353–Asp-365 are enriched in acidic residues. The residue at position 381 (Tyr-381) is a Phosphotyrosine. The residue at position 394 (Cys-394) is a Cysteine methyl ester. Cys-394 is lipidated: S-farnesyl cysteine. A propeptide spans Gln-395–Ser-397 (removed in mature form).

As to quaternary structure, identified in a complex with HSPA1B and BAX. Interacts with RNF207.

Its subcellular location is the membrane. It is found in the cytoplasm. It localises to the microsome. The protein resides in the mitochondrion. The protein localises to the nucleus. Its subcellular location is the perinuclear region. Its function is as follows. Co-chaperone for HSPA8/Hsc70. Plays a role in protein transport into mitochondria via its role as co-chaperone. Functions as co-chaperone for HSPA1B and negatively regulates the translocation of BAX from the cytosol to mitochondria in response to cellular stress, thereby protecting cells against apoptosis. Stimulates ATP hydrolysis, but not the folding of unfolded proteins mediated by HSPA1A (in vitro). Promotes apoptosis in response to cellular stress mediated by exposure to anisomycin or UV. The protein is DnaJ homolog subfamily A member 1 (DNAJA1) of Bos taurus (Bovine).